The primary structure comprises 389 residues: Na(+)/H(+) antiporter NhaA (389 aa).

11 helical membrane passes run 17–37 (ILLL…LAGF), 59–79 (LLLW…GLEV), 95–115 (SLPT…YLLF), 124–144 (AGWA…MALL), 154–174 (VFLL…IALF), 177–197 (SDLS…LVAL), 213–233 (LILW…GVII), 261–281 (FLIL…NMSL), 292–312 (IALG…FVAV), 328–348 (IAPV…IASL), and 363–383 (LGTL…LSKV).

The protein belongs to the NhaA Na(+)/H(+) (TC 2.A.33) antiporter family.

It localises to the cell inner membrane. It catalyses the reaction Na(+)(in) + 2 H(+)(out) = Na(+)(out) + 2 H(+)(in). Functionally, na(+)/H(+) antiporter that extrudes sodium in exchange for external protons. The protein is Na(+)/H(+) antiporter NhaA of Shewanella oneidensis (strain ATCC 700550 / JCM 31522 / CIP 106686 / LMG 19005 / NCIMB 14063 / MR-1).